The chain runs to 86 residues: Bacteriocin thailandicin (86 aa).

Residues L23 to W86 constitute a cross-link (cyclopeptide (Leu-Trp)).

The protein localises to the secreted. Cyclopeptide antibiotic with bacteriolytic activity against the Gram-positive bacteria S.aureus and S.thermophilus, and lower activity against the Gram-negative bacteria E.coli and P.aeruginosa. The protein is Bacteriocin thailandicin of Enterococcus thailandicus.